The chain runs to 121 residues: Pancreatic progenitor cell differentiation and proliferation factor (121 aa).

Disordered regions lie at residues 22 to 47 (GSTSSNSSCGSSEYAGEVIPHPPGLQ) and 101 to 121 (SRQLSESSDSGKVEQGSPPPS). Residues 23-33 (STSSNSSCGSS) show a composition bias toward low complexity. The span at 101-110 (SRQLSESSDS) shows a compositional bias: polar residues.

Belongs to the PPDPF family.

Its function is as follows. Probable regulator of exocrine pancreas development. The sequence is that of Pancreatic progenitor cell differentiation and proliferation factor (ppdpf) from Salmo salar (Atlantic salmon).